The chain runs to 432 residues: Trigger factor (432 aa).

Residues Glu-161–Pro-246 enclose the PPIase FKBP-type domain.

It belongs to the FKBP-type PPIase family. Tig subfamily. As to quaternary structure, homodimer and monomer. In vivo most of the ribosomes are in complex with monomeric TF. Uncomplexed TF, however, is in a monomer-dimer equilibrium with approximately two thirds of TF existing in a dimeric state.

The protein localises to the cytoplasm. The catalysed reaction is [protein]-peptidylproline (omega=180) = [protein]-peptidylproline (omega=0). Involved in protein export. Acts as a chaperone by maintaining the newly synthesized protein in an open conformation. Functions as a peptidyl-prolyl cis-trans isomerase. This Escherichia fergusonii (strain ATCC 35469 / DSM 13698 / CCUG 18766 / IAM 14443 / JCM 21226 / LMG 7866 / NBRC 102419 / NCTC 12128 / CDC 0568-73) protein is Trigger factor.